The sequence spans 524 residues: Thioredoxin reductase 2, mitochondrial (524 aa).

Residues 1–36 (MAAMAVALRGLGGRFRWRTQAVAGGVRGAARGAAAG) constitute a mitochondrion transit peptide. Position 41 to 70 (41 to 70 (DLLVVGGGSGGLACAKEAAQLGRKVAVVDY)) interacts with FAD. C86 and C91 are disulfide-bonded. 2 positions are modified to N6-succinyllysine: K175 and K329. The Proton acceptor role is filled by H497. A cross-link (cysteinyl-selenocysteine (Cys-Sec)) is located at residues 522-523 (CU). A non-standard amino acid (selenocysteine) is located at residue U523.

This sequence belongs to the class-I pyridine nucleotide-disulfide oxidoreductase family. In terms of assembly, homodimer. The cofactor is FAD. Highly expressed in the prostate, ovary, liver, testis, uterus, colon and small intestine. Intermediate levels in brain, skeletal muscle, heart and spleen. Low levels in placenta, pancreas, thymus and peripheral blood leukocytes. According to PubMed:10608886, high levels in kidney, whereas according to PubMed:9923614, levels are low. High expression is observed in the adrenal cortex.

It is found in the mitochondrion. It carries out the reaction [thioredoxin]-dithiol + NADP(+) = [thioredoxin]-disulfide + NADPH + H(+). In terms of biological role, involved in the control of reactive oxygen species levels and the regulation of mitochondrial redox homeostasis. Maintains thioredoxin in a reduced state. May play a role in redox-regulated cell signaling. The protein is Thioredoxin reductase 2, mitochondrial of Homo sapiens (Human).